A 424-amino-acid polypeptide reads, in one-letter code: tRNA (guanine-N(7)-)-methyltransferase non-catalytic subunit wuho (424 aa).

The interval 42-92 (LKGHTSQSQESCTAAAAASTATAASGQAPGGKEQQLANQPEEGGTSASASG) is disordered. The segment covering 46–68 (TSQSQESCTAAAAASTATAASGQ) has biased composition (low complexity). 4 WD repeats span residues 96 to 137 (ATST…ARLL), 184 to 223 (GHLS…DIHS), 227 to 265 (GHRE…ELLQ), and 324 to 364 (AGSW…PASS).

Belongs to the WD repeat TRM82 family. Forms a heterodimer with the catalytic subunit Mettl1. Interacts with mei-P26 and weakly interacts with bgcn; required for the function or formation of the mei-P26-bgcn-bam-sxl complex. Interacts with nanos; may be involved in mei-P26-dependent derepression of the BMP signaling pathway. Interacts with Myc; the interaction may be mediated by mei-P26 and may be involved in the regulation of ribosome biogenesis. In terms of tissue distribution, in testis, it is present at high level in hub cells, a niche for germline stem cells of testis. Ubiquitously expressed in all testicular cells throughout spermatogenesis. Ubiquitously expressed in all germline and somatic cells of the ovary.

It is found in the nucleus. The protein localises to the cytoplasm. Its pathway is tRNA modification; N(7)-methylguanine-tRNA biosynthesis. Functionally, required for the Mettl1-dependent formation of N(7)-methylguanine at position 46 (m7G46) in tRNA. In the Mettl1-wuho methyltransferase complex, it is required to stabilize and induce conformational changes of the catalytic subunit. Required for binding of nanos mRNA and repression of translation by the mei-P26-bgcn-bam-sxl complex. May cooperate with mei-P26 and nanos to derepress the BMP signaling pathway. May cooperate with mei-P26 to suppress expression of a subset of microRNAs. May cooperate with mei-P26 to regulate bam expression levels in germline cells during gametogenesis. Required to promote mitosis to meiosis transition during gametogenesis. May regulate germline cell division in part by regulating ribosome biogenesis. This Drosophila melanogaster (Fruit fly) protein is tRNA (guanine-N(7)-)-methyltransferase non-catalytic subunit wuho.